We begin with the raw amino-acid sequence, 101 residues long: Putative defensin-like protein 307 (101 aa).

Residues 1 to 22 (MEKSALIFIGILLFSTCTSIMA) form the signal peptide. Intrachain disulfides connect Cys29/Cys49, Cys35/Cys54, and Cys40/Cys56.

It belongs to the DEFL family.

It is found in the secreted. The protein is Putative defensin-like protein 307 of Arabidopsis thaliana (Mouse-ear cress).